We begin with the raw amino-acid sequence, 203 residues long: Holliday junction branch migration complex subunit RuvA (203 aa).

Positions 1 to 64 (MIGRLRGIIL…EDAQLLYGFN (64 aa)) are domain I. A domain II region spans residues 65–142 (NKQERTLFKE…KGLHGDLFTP (78 aa)). The tract at residues 143 to 154 (AVDLVLTSPASP) is flexible linker. The interval 155 to 203 (TSEDAEQEAVAALVALGYKPQEASRMVSKIARPDASSETLIRDALRAAL) is domain III.

The protein belongs to the RuvA family. In terms of assembly, homotetramer. Forms an RuvA(8)-RuvB(12)-Holliday junction (HJ) complex. HJ DNA is sandwiched between 2 RuvA tetramers; dsDNA enters through RuvA and exits via RuvB. An RuvB hexamer assembles on each DNA strand where it exits the tetramer. Each RuvB hexamer is contacted by two RuvA subunits (via domain III) on 2 adjacent RuvB subunits; this complex drives branch migration. In the full resolvosome a probable DNA-RuvA(4)-RuvB(12)-RuvC(2) complex forms which resolves the HJ.

The protein localises to the cytoplasm. In terms of biological role, the RuvA-RuvB-RuvC complex processes Holliday junction (HJ) DNA during genetic recombination and DNA repair, while the RuvA-RuvB complex plays an important role in the rescue of blocked DNA replication forks via replication fork reversal (RFR). RuvA specifically binds to HJ cruciform DNA, conferring on it an open structure. The RuvB hexamer acts as an ATP-dependent pump, pulling dsDNA into and through the RuvAB complex. HJ branch migration allows RuvC to scan DNA until it finds its consensus sequence, where it cleaves and resolves the cruciform DNA. The protein is Holliday junction branch migration complex subunit RuvA of Salmonella agona (strain SL483).